Consider the following 274-residue polypeptide: Urease accessory protein UreD (274 aa).

It belongs to the UreD family. As to quaternary structure, ureD, UreF and UreG form a complex that acts as a GTP-hydrolysis-dependent molecular chaperone, activating the urease apoprotein by helping to assemble the nickel containing metallocenter of UreC. The UreE protein probably delivers the nickel.

The protein resides in the cytoplasm. Required for maturation of urease via the functional incorporation of the urease nickel metallocenter. In Klebsiella pneumoniae subsp. pneumoniae (strain ATCC 700721 / MGH 78578), this protein is Urease accessory protein UreD.